Reading from the N-terminus, the 120-residue chain is NAD(P)H-quinone oxidoreductase subunit 3, chloroplastic (120 aa).

The next 3 helical transmembrane spans lie at 9–29 (IFWAFLIISSAIPVLAFLISG), 64–84 (MFALVFVVFDVETVFLYPWAM), and 88–108 (VLGVSAFIEVFIFVLILILGL).

It belongs to the complex I subunit 3 family. NDH is composed of at least 16 different subunits, 5 of which are encoded in the nucleus.

It is found in the plastid. The protein resides in the chloroplast thylakoid membrane. It carries out the reaction a plastoquinone + NADH + (n+1) H(+)(in) = a plastoquinol + NAD(+) + n H(+)(out). The enzyme catalyses a plastoquinone + NADPH + (n+1) H(+)(in) = a plastoquinol + NADP(+) + n H(+)(out). NDH shuttles electrons from NAD(P)H:plastoquinone, via FMN and iron-sulfur (Fe-S) centers, to quinones in the photosynthetic chain and possibly in a chloroplast respiratory chain. The immediate electron acceptor for the enzyme in this species is believed to be plastoquinone. Couples the redox reaction to proton translocation, and thus conserves the redox energy in a proton gradient. This chain is NAD(P)H-quinone oxidoreductase subunit 3, chloroplastic, found in Arabis hirsuta (Hairy rock-cress).